A 527-amino-acid polypeptide reads, in one-letter code: Succinate-semialdehyde dehydrogenase, mitochondrial (527 aa).

The transit peptide at 1 to 35 (MAMAMAMRRAAALGARHILAASSTSSSGVLLRRHM) directs the protein to the mitochondrion. NAD(+) contacts are provided by residues Arg-208, 223-226 (KPSE), and 276-281 (GSTAVG). Residue Arg-208 coordinates substrate. Glu-298 acts as the Proton acceptor in catalysis. 3 residues coordinate substrate: Arg-326, Cys-332, and Ser-489. Cys-332 (nucleophile) is an active-site residue. Cys-332 and Cys-334 are disulfide-bonded.

This sequence belongs to the aldehyde dehydrogenase family. Homotetramer.

Its subcellular location is the mitochondrion matrix. It catalyses the reaction succinate semialdehyde + NAD(+) + H2O = succinate + NADH + 2 H(+). Its pathway is amino-acid degradation; 4-aminobutanoate degradation. Redox-regulated. Inhibited under oxydizing conditions. Its function is as follows. Oxidizes specifically succinate semialdehyde. Involved in plant response to environmental stress by preventing the accumulation of reactive oxygen species. This chain is Succinate-semialdehyde dehydrogenase, mitochondrial (ALDH5F1), found in Oryza sativa subsp. japonica (Rice).